A 74-amino-acid chain; its full sequence is Kappa-scoloptoxin(07)-Ssm2e (74 aa).

A signal peptide spans 1-19 (MLVFYALLFVSVFSNTVMG). Positions 20–41 (ATIDMPIPKPILREAIEEIDVN) are excised as a propeptide.

It belongs to the scoloptoxin-07 family. Contains 3 disulfide bonds. Expressed by the venom gland.

Its subcellular location is the secreted. In terms of biological role, inhibits voltage-gated potassium channels. The protein is Kappa-scoloptoxin(07)-Ssm2e of Scolopendra mutilans (Chinese red-headed centipede).